The sequence spans 177 residues: CDP-archaeol synthase (177 aa).

The next 5 membrane-spanning stretches (helical) occupy residues 6 to 26 (LFAS…ACIF), 54 to 74 (CIFG…LVDF), 90 to 110 (VILA…GSFI), 124 to 144 (LLDQ…VAPI), and 148 to 168 (MIII…IIAY).

The protein belongs to the CDP-archaeol synthase family. The cofactor is Mg(2+).

It localises to the cell membrane. It carries out the reaction 2,3-bis-O-(geranylgeranyl)-sn-glycerol 1-phosphate + CTP + H(+) = CDP-2,3-bis-O-(geranylgeranyl)-sn-glycerol + diphosphate. Its pathway is membrane lipid metabolism; glycerophospholipid metabolism. Functionally, catalyzes the formation of CDP-2,3-bis-(O-geranylgeranyl)-sn-glycerol (CDP-archaeol) from 2,3-bis-(O-geranylgeranyl)-sn-glycerol 1-phosphate (DGGGP) and CTP. This reaction is the third ether-bond-formation step in the biosynthesis of archaeal membrane lipids. The polypeptide is CDP-archaeol synthase (Methanocaldococcus jannaschii (strain ATCC 43067 / DSM 2661 / JAL-1 / JCM 10045 / NBRC 100440) (Methanococcus jannaschii)).